The following is a 216-amino-acid chain: uncharacterized protein (216 aa).

In terms of domain architecture, HTH cro/C1-type spans L8–L63. The H-T-H motif DNA-binding region spans A19–T38.

This is an uncharacterized protein from Coxiella burnetii (strain RSA 493 / Nine Mile phase I).